Consider the following 353-residue polypeptide: Aliphatic aldoxime dehydratase (353 aa).

S219 lines the an aliphatic aldoxime pocket. H299 lines the heme b pocket. An an aliphatic aldoxime-binding site is contributed by H320. H320 is a catalytic residue.

It belongs to the heme-containing dehydratase family. In terms of assembly, homodimer. It depends on heme b as a cofactor.

It catalyses the reaction an aliphatic aldoxime = a nitrile + H2O. With respect to regulation, active when the heme iron is in the ferrous state. The activity is enhanced by reducing agents, such as Na(2)S, Na(2)S(2)(O4), 2-mercaptoethanol, and L-cysteine and supplementary additions of electron acceptors such as flavins, sulfite ion, and vitamin K3. The effect of various chemicals on the enzyme activity is different in the presence and absence of the reducing reagent, Na(2)S, which acts not only as a reductant but also changes the substrate specificity of the enzyme. Its function is as follows. Catalyzes the dehydration of aldoximes to their corresponding nitrile. Is active toward various arylalkyl- and alkyl-aldoximes, and to a lesser extent toward aryl-aldoximes. The protein is Aliphatic aldoxime dehydratase of Rhodococcus erythropolis (Arthrobacter picolinophilus).